A 95-amino-acid chain; its full sequence is MSVDLATVKRVAHLARIAVNEDEAQRMVGELNGMLGFVEQLSEVNVDGVEAMTSVTPMAMKKRTDEVTDGSKAADIVANAPNTDQNFFLVPKVVE.

The protein belongs to the GatC family. As to quaternary structure, heterotrimer of A, B and C subunits.

The enzyme catalyses L-glutamyl-tRNA(Gln) + L-glutamine + ATP + H2O = L-glutaminyl-tRNA(Gln) + L-glutamate + ADP + phosphate + H(+). The catalysed reaction is L-aspartyl-tRNA(Asn) + L-glutamine + ATP + H2O = L-asparaginyl-tRNA(Asn) + L-glutamate + ADP + phosphate + 2 H(+). In terms of biological role, allows the formation of correctly charged Asn-tRNA(Asn) or Gln-tRNA(Gln) through the transamidation of misacylated Asp-tRNA(Asn) or Glu-tRNA(Gln) in organisms which lack either or both of asparaginyl-tRNA or glutaminyl-tRNA synthetases. The reaction takes place in the presence of glutamine and ATP through an activated phospho-Asp-tRNA(Asn) or phospho-Glu-tRNA(Gln). This Rhizobium rhizogenes (strain K84 / ATCC BAA-868) (Agrobacterium radiobacter) protein is Aspartyl/glutamyl-tRNA(Asn/Gln) amidotransferase subunit C.